A 135-amino-acid chain; its full sequence is Transcriptional activator protein (135 aa).

The Nuclear localization signal signature appears at 17 to 32 (KVQHRAAKRKRIRRKR). Residues 37 to 54 (CGCSYYVHINCHNHGFTH) fold into a zinc finger. The segment at 77 to 115 (LFQDHSTRQQTVRNEPGHNNRPDTVQPQPEESVGTTSML) is disordered. Residues 98 to 114 (PDTVQPQPEESVGTTSM) are compositionally biased toward polar residues. The transactivation stretch occupies residues 120–135 (GLDDLTASDLAFLEGI).

This sequence belongs to the geminiviridae transcriptional activator protein family. In terms of assembly, monomer. Homodimer. Homooligomer. Self-interaction correlates with nuclear localization and efficient activation of transcription. Monomers suppress local silencing by interacting with and inactivating host adenosine kinase 2 (ADK2) in the cytoplasm. Interacts with and inhibits host SNF1 kinase. Binds to ssDNA. Post-translationally, phosphorylated.

The protein localises to the host nucleus. The protein resides in the host cytoplasm. In terms of biological role, strong activator of the late viral genes promoters. Enhances the expression of the capsid protein and nuclear shuttle protein. Acts as a suppressor of RNA-mediated gene silencing, also known as post-transcriptional gene silencing (PTGS), a mechanism of plant viral defense that limits the accumulation of viral RNAs. Suppresses the host RNA silencing by inhibiting adenosine kinase 2 (ADK2), a kinase involved in a general methylation pathway. Also suppresses the host basal defense by interacting with and inhibiting SNF1 kinase, a key regulator of cell metabolism implicated in innate antiviral defense. Determines pathogenicity. The sequence is that of Transcriptional activator protein from Indian cassava mosaic virus (ICMV).